The primary structure comprises 218 residues: Adenylate kinase (218 aa).

An ATP-binding site is contributed by 10-15 (GAGKGT). The tract at residues 30 to 59 (STGDMLRAAVKAGTPLGLQAKAVMDAGQLV) is NMP. AMP contacts are provided by residues T31, R36, 57–59 (QLV), 85–88 (GFPR), and Q92. The segment at 122–159 (GRRSHPASGRTYHVKFNPPKVEGKDDVTGEPLVQREDD) is LID. ATP is bound by residues R123 and 132 to 133 (TY). Residues 127–150 (PASGRTYHVKFNPPKVEGKDDVTG) form a disordered region. AMP is bound by residues R156 and R167. G203 provides a ligand contact to ATP.

Belongs to the adenylate kinase family. In terms of assembly, monomer.

It localises to the cytoplasm. The enzyme catalyses AMP + ATP = 2 ADP. It functions in the pathway purine metabolism; AMP biosynthesis via salvage pathway; AMP from ADP: step 1/1. Catalyzes the reversible transfer of the terminal phosphate group between ATP and AMP. Plays an important role in cellular energy homeostasis and in adenine nucleotide metabolism. The protein is Adenylate kinase of Acidovorax ebreus (strain TPSY) (Diaphorobacter sp. (strain TPSY)).